Reading from the N-terminus, the 479-residue chain is B-cell CLL/lymphoma 6 member B protein (479 aa).

Positions 38-105 constitute a BTB domain; it reads TDVTLLVGGQ…MYTSRLRLSP (68 aa). Disordered stretches follow at residues 143–190 and 210–259; these read RPLE…PDPK and GSLV…LSPT. The segment covering 147-160 has biased composition (pro residues); sequence AEPPTPPTAPPPGS. Residues 162–172 are compositionally biased toward basic and acidic residues; sequence RRSEGHPDPPT. Residues 234–244 are compositionally biased toward low complexity; that stretch reads SSSSSSSSSSS. C2H2-type zinc fingers lie at residues 328–350, 356–378, 384–406, 412–434, and 440–463; these read YKCQ…RTVH, YHCS…SRIH, YKCE…VLIH, YPCP…VRIH, and YHCD…RQKH.

As to quaternary structure, associates with BCL6 through the BTB domain. In terms of tissue distribution, ubiquitously expressed with higher expression found in heart and placenta.

The protein localises to the nucleus. In terms of biological role, acts as a sequence-specific transcriptional repressor in association with BCL6. May function in a narrow stage or be related to some events in the early B-cell development. The sequence is that of B-cell CLL/lymphoma 6 member B protein (BCL6B) from Homo sapiens (Human).